A 564-amino-acid chain; its full sequence is Hsp70-Hsp90 organising protein (564 aa).

3 TPR repeats span residues 7–40, 42–74, and 76–108; these read AQRL…DPLD, VLYS…KKDW, and KGYI…DPNN. Residues 197-239 adopt a coiled-coil conformation; it reads EGNDAEERQRQQREEEERRKKKEEEERKKKEEEEMKKQNRTPE. Positions 199-247 are disordered; the sequence is NDAEERQRQQREEEERRKKKEEEERKKKEEEEMKKQNRTPEQIQGDEHK. The span at 201–233 shows a compositional bias: basic and acidic residues; the sequence is AEERQRQQREEEERRKKKEEEERKKKEEEEMKK. TPR repeat units follow at residues 243–276, 278–310, 318–351, 378–411, 413–445, and 446–479; these read GDEH…NPND, MYHY…RYNF, AKLY…DNNR, AEEH…NPND, KLYS…DPTF, and VKAY…DPNN. Residues 513–552 enclose the STI1 domain; it reads DPEIQQIISDPQFQIILQKLNENPNSISEYIKDPKIFNGL.

Monomer. Homodimer. Forms a complex composed of HOP and chaperones HSP70 and HSP90; the interaction is stronger in the absence of ATP. Interacts (via TPR 1, 2, 3, 7, 8 and 9 repeats) with HSP70 (via C-terminus); the interaction is direct and is stronger in the absence of ATP. Interacts (via TPR 4, 5 and 6 repeats) with HSP90 (via C-terminus); the interaction is direct.

It is found in the cytoplasm. In terms of biological role, acts as a co-chaperone and mediates the association of the chaperones HSP70 and HSP90 probably facilitating substrate transfer from HSP70 to HSP90. Stimulates HSP70 ATPase activity and, in contrast, inhibits HSP90 ATPase activity. This chain is Hsp70-Hsp90 organising protein, found in Plasmodium falciparum (isolate 3D7).